Reading from the N-terminus, the 211-residue chain is Eukaryotic translation initiation factor 4E (211 aa).

This sequence belongs to the eukaryotic initiation factor 4E family. As to quaternary structure, eIF4F is a multi-subunit complex, the composition of which varies with external and internal environmental conditions. It is composed of at least eIF4A, eIF4E and eIF4G. eIF4E is also known to interact with other partners.

Functionally, recognizes and binds the 7-methylguanosine-containing mRNA cap during an early step in the initiation of protein synthesis and facilitates ribosome binding by inducing the unwinding of the mRNAs secondary structures. The polypeptide is Eukaryotic translation initiation factor 4E (TIF45) (Eremothecium gossypii (strain ATCC 10895 / CBS 109.51 / FGSC 9923 / NRRL Y-1056) (Yeast)).